A 137-amino-acid chain; its full sequence is Large-conductance mechanosensitive channel (137 aa).

Helical transmembrane passes span 10-30 and 76-96; these read FAMR…AAFG and GVFI…FMAI.

This sequence belongs to the MscL family. Homopentamer.

Its subcellular location is the cell inner membrane. Channel that opens in response to stretch forces in the membrane lipid bilayer. May participate in the regulation of osmotic pressure changes within the cell. The chain is Large-conductance mechanosensitive channel from Klebsiella pneumoniae subsp. pneumoniae (strain ATCC 700721 / MGH 78578).